The chain runs to 142 residues: Transcriptional regulator MraZ (142 aa).

SpoVT-AbrB domains follow at residues 5 to 51 (ASSL…PRPV) and 77 to 120 (ASDV…DAAR).

This sequence belongs to the MraZ family. Forms oligomers.

It localises to the cytoplasm. The protein resides in the nucleoid. The chain is Transcriptional regulator MraZ from Herminiimonas arsenicoxydans.